Consider the following 852-residue polypeptide: Bifunctional uridylyltransferase/uridylyl-removing enzyme (852 aa).

The tract at residues Met-1 to Ile-318 is uridylyltransferase. The uridylyl-removing stretch occupies residues Asp-319 to Phe-672. An HD domain is found at Val-436 to Leu-558. 2 consecutive ACT domains span residues Gln-673–Arg-757 and Ser-785–Ala-852.

This sequence belongs to the GlnD family. Mg(2+) is required as a cofactor.

It carries out the reaction [protein-PII]-L-tyrosine + UTP = [protein-PII]-uridylyl-L-tyrosine + diphosphate. The enzyme catalyses [protein-PII]-uridylyl-L-tyrosine + H2O = [protein-PII]-L-tyrosine + UMP + H(+). Uridylyltransferase (UTase) activity is inhibited by glutamine, while glutamine activates uridylyl-removing (UR) activity. In terms of biological role, modifies, by uridylylation and deuridylylation, the PII regulatory proteins (GlnB and homologs), in response to the nitrogen status of the cell that GlnD senses through the glutamine level. Under low glutamine levels, catalyzes the conversion of the PII proteins and UTP to PII-UMP and PPi, while under higher glutamine levels, GlnD hydrolyzes PII-UMP to PII and UMP (deuridylylation). Thus, controls uridylylation state and activity of the PII proteins, and plays an important role in the regulation of nitrogen assimilation and metabolism. The protein is Bifunctional uridylyltransferase/uridylyl-removing enzyme of Neisseria gonorrhoeae (strain NCCP11945).